The sequence spans 533 residues: Lysophosphatidylcholine acyltransferase (533 aa).

Over 1 to 79 (MTTSTIKPTG…VLTVLLLPIR (79 aa)) the chain is Cytoplasmic. The helical; Signal-anchor for type II membrane protein transmembrane segment at 80-100 (VVGCVLSLISAWMFACIGLYG) threads the bilayer. Topologically, residues 101–533 (MTLDDLKAKP…PKAVVTTAEN (433 aa)) are lumenal. Positions 158-163 (HSSYVD) match the HXXXXD motif motif. 3 EF-hand domains span residues 402-437 (LKNTDLHKLFALLDHRRSGTVSLKSFLLCSLFCKLK), 439-474 (SDLLTFLRALIHLYSESSQQIDRESFVRLMRHAGGK), and 475-510 (LNEQKAQALFYALDTDNLGYVSFDSFVELTEKQKSS).

This sequence belongs to the 1-acyl-sn-glycerol-3-phosphate acyltransferase family.

It localises to the endoplasmic reticulum membrane. The protein resides in the golgi apparatus membrane. It is found in the lipid droplet. It carries out the reaction a 1-acyl-sn-glycero-3-phosphocholine + an acyl-CoA = a 1,2-diacyl-sn-glycero-3-phosphocholine + CoA. The protein operates within lipid metabolism; phospholipid metabolism. Acetyltransferase which mediates the conversion of 1-acyl-sn-glycero-3-phosphocholine (LPC) into phosphatidylcholine (PC). Has a calcium-independent activity. Displays a clear preference for saturated fatty acyl-CoAs, and 1-myristoyl or 1-palmitoyl LPC as acyl donors and acceptors, respectively. Involved in the regulation of lipid droplet number and size. This Drosophila melanogaster (Fruit fly) protein is Lysophosphatidylcholine acyltransferase.